The primary structure comprises 514 residues: Major facilitator superfamily domain-containing protein 4A (514 aa).

Helical transmembrane passes span 19 to 39 (LTYW…GPTL), 53 to 73 (ISWV…LGGV), 82 to 102 (LWAL…IPFC), 107 to 127 (VLAS…TVAN), and 139 to 159 (AVFL…SPLI). An N-linked (GlcNAc...) asparagine glycan is attached at asparagine 177. Helical transmembrane passes span 221 to 241 (YAFW…LMLL), 307 to 327 (FFAI…LTGA), 347 to 367 (VAGY…LLSI), 376 to 396 (ATMV…LLIF), 400 to 420 (VVFL…TFPS), 438 to 458 (VLVT…GSIF), and 466 to 486 (FLVC…LLLF).

It belongs to the major facilitator superfamily.

It is found in the membrane. This is Major facilitator superfamily domain-containing protein 4A from Homo sapiens (Human).